Here is a 473-residue protein sequence, read N- to C-terminus: Uronate isomerase (473 aa).

Belongs to the metallo-dependent hydrolases superfamily. Uronate isomerase family.

It catalyses the reaction D-glucuronate = D-fructuronate. It carries out the reaction aldehydo-D-galacturonate = keto-D-tagaturonate. Its pathway is carbohydrate metabolism; pentose and glucuronate interconversion. This Bacillus licheniformis (strain ATCC 14580 / DSM 13 / JCM 2505 / CCUG 7422 / NBRC 12200 / NCIMB 9375 / NCTC 10341 / NRRL NRS-1264 / Gibson 46) protein is Uronate isomerase.